A 181-amino-acid chain; its full sequence is Oligoribonuclease (181 aa).

Residues 8 to 171 form the Exonuclease domain; that stretch reads LIWIDLEMTG…DDIRESVAEL (164 aa). The active site involves Tyr-129.

This sequence belongs to the oligoribonuclease family.

It localises to the cytoplasm. Its function is as follows. 3'-to-5' exoribonuclease specific for small oligoribonucleotides. This is Oligoribonuclease from Sodalis glossinidius (strain morsitans).